We begin with the raw amino-acid sequence, 92 residues long: MAYRGQGQKVQKVMVQPINLIFRYLQNRSRISVWLYEQVNMRIEGCIIGFDEYMNLVLDDAEEVHMKTKNRKPLGRIMLKGDNITLLQSVSN.

Residues 18–92 (INLIFRYLQN…NITLLQSVSN (75 aa)) form the Sm domain.

Belongs to the snRNP Sm proteins family. Core component of the spliceosomal U1, U2, U4 and U5 small nuclear ribonucleoproteins (snRNPs), the building blocks of the spliceosome. Most spliceosomal snRNPs contain a common set of Sm proteins, snrpb, snrpd1, snrpd2, snrpd3, snrpe, snrpf and snrpg that assemble in a heptameric protein ring on the Sm site of the small nuclear RNA to form the core snRNP. Component of the U1 snRNP. The U1 snRNP is composed of the U1 snRNA and the 7 core Sm proteins snrpb, snrpd1, snrpd2, snrpd3, snrpe, snrpf and snrpg, and at least three U1 snRNP-specific proteins snrnp70/u1-70k, snrpa/u1-a and snrpc/u1-c. Component of the U4/U6-U5 tri-snRNP complex composed of the U4, U6 and U5 snRNAs and at least prpf3, prpf4, prpf6, prpf8, prpf31, snrnp200, txnl4a, snrnp40, snrpb, snrpd1, snrpd2, snrpd3, snrpe, snrpf, snrpg, ddx23, cd2bp2, ppih, snu13, eftud2, sart1 and usp39, plus lsm2, lsm3, lsm4, lsm5, lsm6, lsm7 and lsm8. Component of the U7 snRNP complex, or U7 Sm protein core complex, that is composed of the U7 snRNA and at least lsm10, lsm11, snrpb, snrpd3, snrpe, snrpf and snrpg; the complex does not contain snrpd1 and snrpd2. Component of the minor spliceosome, which splices U12-type introns. Part of the SMN-Sm complex that contains smn1, gemin2/sip1, ddx20/gemin3, gemin4, gemin5, gemin6, gemin7, gemin8, strap/unrip and the Sm proteins snrpb, snrpd1, snrpd2, snrpd3, snrpe, snrpf and snrpg; catalyzes core snRNPs assembly. Forms a 6S pICln-Sm complex composed of clns1a/pICln, snrpd1, snrpd2, snrpe, snrpf and snrpg; ring-like structure where clns1a/pICln mimics additional Sm proteins and which is unable to assemble into the core snRNP.

It is found in the cytoplasm. It localises to the cytosol. The protein localises to the nucleus. Plays a role in pre-mRNA splicing as a core component of the spliceosomal U1, U2, U4 and U5 small nuclear ribonucleoproteins (snRNPs), the building blocks of the spliceosome. Component of both the pre-catalytic spliceosome B complex and activated spliceosome C complexes. As a component of the minor spliceosome, involved in the splicing of U12-type introns in pre-mRNAs. As part of the U7 snRNP it is involved in histone 3'-end processing. The polypeptide is Small nuclear ribonucleoprotein E (snrpe) (Danio rerio (Zebrafish)).